Consider the following 109-residue polypeptide: MNINMLMQQAQRMQKDMESNIKKAKEELAQTEVHAEAGGGLVKVTMTGRYIVKRIEINPELLQDEPDMIEDLIAAAVNDAVRQAEVVSEEKMQKANSGMGLPPGLAGMF.

This sequence belongs to the YbaB/EbfC family. Homodimer.

The protein resides in the cytoplasm. Its subcellular location is the nucleoid. In terms of biological role, binds to DNA and alters its conformation. May be involved in regulation of gene expression, nucleoid organization and DNA protection. This chain is Nucleoid-associated protein A1S_1684, found in Acinetobacter baumannii (strain ATCC 17978 / DSM 105126 / CIP 53.77 / LMG 1025 / NCDC KC755 / 5377).